The chain runs to 484 residues: Putative amidase AmiA2 (484 aa).

Residues K93 and S167 each act as charge relay system in the active site. Residue S191 is the Acyl-ester intermediate of the active site.

The protein belongs to the amidase family.

The catalysed reaction is a monocarboxylic acid amide + H2O = a monocarboxylate + NH4(+). In Mycobacterium bovis (strain ATCC BAA-935 / AF2122/97), this protein is Putative amidase AmiA2 (amiA2).